A 102-amino-acid polypeptide reads, in one-letter code: NADH-quinone oxidoreductase subunit K 1 (102 aa).

Helical transmembrane passes span 5–25 (LSHYLTVSAILFTLGVFGIFL), 31–51 (IVILMSVELILLAVNINMVAF), and 65–85 (LFILTVAAAEAAIGLAILVVF).

This sequence belongs to the complex I subunit 4L family. As to quaternary structure, NDH-1 is composed of 14 different subunits. Subunits NuoA, H, J, K, L, M, N constitute the membrane sector of the complex.

The protein resides in the cell inner membrane. The catalysed reaction is a quinone + NADH + 5 H(+)(in) = a quinol + NAD(+) + 4 H(+)(out). NDH-1 shuttles electrons from NADH, via FMN and iron-sulfur (Fe-S) centers, to quinones in the respiratory chain. The immediate electron acceptor for the enzyme in this species is believed to be ubiquinone. Couples the redox reaction to proton translocation (for every two electrons transferred, four hydrogen ions are translocated across the cytoplasmic membrane), and thus conserves the redox energy in a proton gradient. The polypeptide is NADH-quinone oxidoreductase subunit K 1 (Rhizobium etli (strain ATCC 51251 / DSM 11541 / JCM 21823 / NBRC 15573 / CFN 42)).